Consider the following 233-residue polypeptide: Zinc import ATP-binding protein ZnuC (233 aa).

An ABC transporter domain is found at 6-222 (IEFHNVSKKF…SDFSNALSSL (217 aa)). 38–45 (GPNGAGKT) provides a ligand contact to ATP.

This sequence belongs to the ABC transporter superfamily. Zinc importer (TC 3.A.1.15.5) family. In terms of assembly, the complex is composed of two ATP-binding proteins (ZnuC), two transmembrane proteins (ZnuB) and a solute-binding protein (ZnuA).

The protein resides in the cell inner membrane. It carries out the reaction Zn(2+)(out) + ATP(in) + H2O(in) = Zn(2+)(in) + ADP(in) + phosphate(in) + H(+)(in). Its function is as follows. Part of the ABC transporter complex ZnuABC involved in zinc import. Responsible for energy coupling to the transport system. The sequence is that of Zinc import ATP-binding protein ZnuC from Rickettsia bellii (strain RML369-C).